Consider the following 1401-residue polypeptide: DNA-directed RNA polymerase subunit beta' (1401 aa).

Zn(2+) is bound by residues Cys70, Cys72, Cys85, and Cys88. Mg(2+) is bound by residues Asp460, Asp462, and Asp464. Positions 814, 888, 895, and 898 each coordinate Zn(2+). The tract at residues 1369–1388 (RQKQKAVEQEGPSAEQATDN) is disordered.

The protein belongs to the RNA polymerase beta' chain family. In terms of assembly, the RNAP catalytic core consists of 2 alpha, 1 beta, 1 beta' and 1 omega subunit. When a sigma factor is associated with the core the holoenzyme is formed, which can initiate transcription. Mg(2+) is required as a cofactor. Zn(2+) serves as cofactor.

The catalysed reaction is RNA(n) + a ribonucleoside 5'-triphosphate = RNA(n+1) + diphosphate. Functionally, DNA-dependent RNA polymerase catalyzes the transcription of DNA into RNA using the four ribonucleoside triphosphates as substrates. This chain is DNA-directed RNA polymerase subunit beta', found in Aliivibrio fischeri (strain ATCC 700601 / ES114) (Vibrio fischeri).